Reading from the N-terminus, the 182-residue chain is UPF0301 protein NGK_1355 (182 aa).

The protein belongs to the UPF0301 (AlgH) family.

In Neisseria gonorrhoeae (strain NCCP11945), this protein is UPF0301 protein NGK_1355.